Consider the following 366-residue polypeptide: Acetylserotonin O-methyltransferase 3 (366 aa).

Positions 209, 232, 253, and 267 each coordinate S-adenosyl-L-homocysteine. His271 serves as the catalytic Proton acceptor. Residues Glu302 and Glu332 contribute to the active site.

It belongs to the class I-like SAM-binding methyltransferase superfamily. Cation-independent O-methyltransferase family. In terms of assembly, homodimer. As to expression, expressed at low levels in roots, shoots, leaves, stems and flowers.

Its subcellular location is the cytoplasm. It catalyses the reaction N-acetylserotonin + S-adenosyl-L-methionine = melatonin + S-adenosyl-L-homocysteine + H(+). The protein operates within aromatic compound metabolism; melatonin biosynthesis; melatonin from serotonin: step 1/2. Functionally, methyltransferase which catalyzes the transfer of a methyl group onto N-acetylserotonin, producing melatonin (N-acetyl-5-methoxytryptamine). The polypeptide is Acetylserotonin O-methyltransferase 3 (Oryza sativa subsp. japonica (Rice)).